Consider the following 785-residue polypeptide: MGSDWDEIKRLAADFQKAQLTSTLQQLSERNCVEIVALLLEKQLLDVVFTNDGKEYITPDHLEREIQDELYTNGGRANLVEVSKTLNVDLSRIETLAERIAEENPQIHLILGQLIDEDYISHIAQEINEKLALRGEISISDLASQFDLPSDFLQHQVVEKHLGKTIKGRQDSTNPRVFFTQAYIQRCKAKIRGALNAITRPTNVATILQQINVQEKIFHSLLDEISPAGQVTSKLSNAQYVPHIYAKTQSEWVQSFFKQNGFIEYEAINKLGISDPKSYILKQLPQEELYFLKRIALQQRLVDLTVVTALNECNATKQYLDLSTILPSNLSVEDIEEVFHTLTSGPKQSHLSTLVYLDGIVFSQPYLNELIQPCQELALSQGKSAIDSGIYQQYIVDKTLAQKGGNASNQLDDDEDGKPDKRDERRKKAASGKAGGGAQGRETKTKSTKKHQRGRAAAAQHSDDDDDDFQRGGGGGGSNKKSVKPLDLVKCEDVVKLIFPVLEEEGIEHLAKPIAKLYLQQLNQSALAKAQELYEATPQTNRRQTHASIQERINTLLVDIRLYEKGLKLLPQDTQAQLVKYLLKSLGNEICNELALYVASECNLTVKNNNLNVDQRNKLAQECDAQYRAVLVEQNKALNKSIDDFELATESVLKVCSMIIKKVDKKKDRLLIADHKQKLQQQLLENQEPALILHLAALILFTSISGCILHASGKFVSSILQYIRGSLDDQQNALLISYHDLVLKVLQASPESAESKLAHEQLQGLQSKVVELAQNFSRASVSKAD.

The tract at residues 404–483 (GGNASNQLDD…GGGGSNKKSV (80 aa)) is disordered.

It belongs to the UFL1 family.

E3 UFM1-protein ligase that mediates ufmylation of target proteins. The polypeptide is E3 UFM1-protein ligase 1 homolog (Drosophila willistoni (Fruit fly)).